The following is a 233-amino-acid chain: EEF1A lysine methyltransferase 2 (233 aa).

This sequence belongs to the class I-like SAM-binding methyltransferase superfamily. EFM4 family.

It localises to the cytoplasm. The protein localises to the nucleus. The catalysed reaction is L-lysyl-[protein] + 3 S-adenosyl-L-methionine = N(6),N(6),N(6)-trimethyl-L-lysyl-[protein] + 3 S-adenosyl-L-homocysteine + 3 H(+). Functionally, protein-lysine methyltransferase that selectively catalyzes the trimethylation of EEF1A at 'Lys-318'. The sequence is that of EEF1A lysine methyltransferase 2 from Danio rerio (Zebrafish).